Reading from the N-terminus, the 259-residue chain is Type III pantothenate kinase (259 aa).

6-13 (DVGNTNIV) lines the ATP pocket. Residues tyrosine 100 and 107 to 110 (GADR) each bind substrate. Catalysis depends on aspartate 109, which acts as the Proton acceptor. Aspartate 129 contacts K(+). Threonine 132 serves as a coordination point for ATP. Residue threonine 184 coordinates substrate.

Belongs to the type III pantothenate kinase family. Homodimer. Requires NH4(+) as cofactor. It depends on K(+) as a cofactor.

The protein resides in the cytoplasm. The enzyme catalyses (R)-pantothenate + ATP = (R)-4'-phosphopantothenate + ADP + H(+). Its pathway is cofactor biosynthesis; coenzyme A biosynthesis; CoA from (R)-pantothenate: step 1/5. In terms of biological role, catalyzes the phosphorylation of pantothenate (Pan), the first step in CoA biosynthesis. The protein is Type III pantothenate kinase of Clostridium perfringens (strain ATCC 13124 / DSM 756 / JCM 1290 / NCIMB 6125 / NCTC 8237 / Type A).